A 450-amino-acid chain; its full sequence is 3-phosphoshikimate 1-carboxyvinyltransferase (450 aa).

Residues 1–26 are disordered; that stretch reads MSGHGTPIPMTSRRASPLKGEAHVPG. 3-phosphoshikimate contacts are provided by Lys-28, Ser-29, and Arg-33. Lys-28 contacts phosphoenolpyruvate. Gly-101 and Arg-129 together coordinate phosphoenolpyruvate. 3-phosphoshikimate-binding residues include Ser-174, Gln-176, Asp-327, and Lys-354. Gln-176 lines the phosphoenolpyruvate pocket. Asp-327 serves as the catalytic Proton acceptor. The phosphoenolpyruvate site is built by Arg-358 and Arg-403.

The protein belongs to the EPSP synthase family. In terms of assembly, monomer.

The protein resides in the cytoplasm. It carries out the reaction 3-phosphoshikimate + phosphoenolpyruvate = 5-O-(1-carboxyvinyl)-3-phosphoshikimate + phosphate. It participates in metabolic intermediate biosynthesis; chorismate biosynthesis; chorismate from D-erythrose 4-phosphate and phosphoenolpyruvate: step 6/7. Functionally, catalyzes the transfer of the enolpyruvyl moiety of phosphoenolpyruvate (PEP) to the 5-hydroxyl of shikimate-3-phosphate (S3P) to produce enolpyruvyl shikimate-3-phosphate and inorganic phosphate. This Ruegeria sp. (strain TM1040) (Silicibacter sp.) protein is 3-phosphoshikimate 1-carboxyvinyltransferase.